The following is a 240-amino-acid chain: tRNA1(Val) (adenine(37)-N6)-methyltransferase (240 aa).

Belongs to the methyltransferase superfamily. tRNA (adenine-N(6)-)-methyltransferase family.

The protein resides in the cytoplasm. It catalyses the reaction adenosine(37) in tRNA1(Val) + S-adenosyl-L-methionine = N(6)-methyladenosine(37) in tRNA1(Val) + S-adenosyl-L-homocysteine + H(+). In terms of biological role, specifically methylates the adenine in position 37 of tRNA(1)(Val) (anticodon cmo5UAC). The sequence is that of tRNA1(Val) (adenine(37)-N6)-methyltransferase from Vibrio cholerae serotype O1 (strain ATCC 39315 / El Tor Inaba N16961).